A 746-amino-acid polypeptide reads, in one-letter code: Eukaryotic translation initiation factor 3 subunit B (746 aa).

A compositionally biased stretch (basic and acidic residues) spans methionine 1–alanine 11. Residues methionine 1–glutamate 20 form a disordered region. In terms of domain architecture, RRM spans threonine 42–aspartate 128. 7 WD repeats span residues aspartate 195–arginine 234, proline 247–alanine 294, proline 307–lysine 346, isoleucine 349–asparagine 386, threonine 458–proline 500, leucine 517–glutamate 560, and alanine 575–glutamate 620.

The protein belongs to the eIF-3 subunit B family. In terms of assembly, component of the eukaryotic translation initiation factor 3 (eIF-3) complex.

The protein localises to the cytoplasm. Its function is as follows. RNA-binding component of the eukaryotic translation initiation factor 3 (eIF-3) complex, which is involved in protein synthesis of a specialized repertoire of mRNAs and, together with other initiation factors, stimulates binding of mRNA and methionyl-tRNAi to the 40S ribosome. The eIF-3 complex specifically targets and initiates translation of a subset of mRNAs involved in cell proliferation. This chain is Eukaryotic translation initiation factor 3 subunit B, found in Pyricularia oryzae (strain 70-15 / ATCC MYA-4617 / FGSC 8958) (Rice blast fungus).